Reading from the N-terminus, the 290-residue chain is Proteasome subunit beta (290 aa).

The propeptide at 1-58 (MTTSGGLTGPGAFGRLPQPFHQPGITSFVEFLALQAPDLLPGRLQMPAGGQPPEVPHG) is removed in mature form; by autocatalysis. Residue T59 is the Nucleophile of the active site.

This sequence belongs to the peptidase T1B family. As to quaternary structure, the 20S proteasome core is composed of 14 alpha and 14 beta subunits that assemble into four stacked heptameric rings, resulting in a barrel-shaped structure. The two inner rings, each composed of seven catalytic beta subunits, are sandwiched by two outer rings, each composed of seven alpha subunits. The catalytic chamber with the active sites is on the inside of the barrel. Has a gated structure, the ends of the cylinder being occluded by the N-termini of the alpha-subunits. Is capped by the proteasome-associated ATPase, ARC.

The protein localises to the cytoplasm. It carries out the reaction Cleavage of peptide bonds with very broad specificity.. Its pathway is protein degradation; proteasomal Pup-dependent pathway. With respect to regulation, the formation of the proteasomal ATPase ARC-20S proteasome complex, likely via the docking of the C-termini of ARC into the intersubunit pockets in the alpha-rings, may trigger opening of the gate for substrate entry. Interconversion between the open-gate and close-gate conformations leads to a dynamic regulation of the 20S proteasome proteolysis activity. Its function is as follows. Component of the proteasome core, a large protease complex with broad specificity involved in protein degradation. This chain is Proteasome subunit beta, found in Acidothermus cellulolyticus (strain ATCC 43068 / DSM 8971 / 11B).